A 442-amino-acid polypeptide reads, in one-letter code: tRNA modification GTPase MnmE (442 aa).

Positions 24, 82, and 120 each coordinate (6S)-5-formyl-5,6,7,8-tetrahydrofolate. The region spanning 217–367 is the TrmE-type G domain; that stretch reads GLHIVITGEP…LVSVIKEKVE (151 aa). GTP-binding positions include 227–232, 246–252, and 271–274; these read NVGKST, SEYVGTT, and DTAG. Ser231 and Thr252 together coordinate Mg(2+). A (6S)-5-formyl-5,6,7,8-tetrahydrofolate-binding site is contributed by Lys442.

Belongs to the TRAFAC class TrmE-Era-EngA-EngB-Septin-like GTPase superfamily. TrmE GTPase family. As to quaternary structure, homodimer. Heterotetramer of two MnmE and two MnmG subunits. The cofactor is K(+).

Its subcellular location is the cytoplasm. In terms of biological role, exhibits a very high intrinsic GTPase hydrolysis rate. Involved in the addition of a carboxymethylaminomethyl (cmnm) group at the wobble position (U34) of certain tRNAs, forming tRNA-cmnm(5)s(2)U34. The protein is tRNA modification GTPase MnmE of Wolbachia sp. subsp. Brugia malayi (strain TRS).